Here is a 910-residue protein sequence, read N- to C-terminus: Auxilin (910 aa).

Repeat copies occupy residues 33–36, 37–40, and 41–44. The segment at 33-44 is 3 X 4 AA approximate tandem repeats; the sequence is NLKDNLKDTLKD. Residues 52–219 form the Phosphatase tensin-type domain; the sequence is SVTSYTKGDL…GYMCDLLADK (168 aa). Residue Ser-109 is modified to Phosphoserine. Cys-161 functions as the Phosphocysteine intermediate in the catalytic mechanism. One can recognise a C2 tensin-type domain in the interval 225-363; it reads FKPLTIKSIT…FQVTLDVELQ (139 aa). The SH3-binding motif lies at 406 to 414; the sequence is PIDIPPDNP. The segment at 448–772 is disordered; that stretch reads QESEQSDDEL…RGKAAANLEG (325 aa). Ser-450, Ser-453, Ser-560, and Ser-567 each carry phosphoserine. Low complexity predominate over residues 547–569; it reads PSGPTSTQSTPRRSATSTSASPT. The segment covering 596–626 has biased composition (polar residues); sequence FLNTASASSDPFLQPTRSPSPTVHASSTPAV. The segment covering 651 to 666 has biased composition (low complexity); the sequence is SAATSPTGSSHGTPTH. Residues 715-725 are compositionally biased toward gly residues; the sequence is MGGGWQQGGGY. Over residues 732 to 758 the composition is skewed to polar residues; sequence SKPQSSMPHSSPQNRPNYNVSFSSMPG. One can recognise a J domain in the interval 846 to 910; the sequence is TKWKPVGMAD…FENQGQKPLY (65 aa).

In terms of assembly, forms a complex composed of HSPA8, CLTC and DNAJC6. Interacts with HSPA8/HSC70 in an ATP-dependent manner; this interaction stimulates the HSPA8's ATPase activity. Interacts with CLTC; this interaction produces a local change in heavy-chain contacts, creating a detectable global distortion of the clathrin coat. Interacts with AP2A2. Interacts with DNM1(GTP-bound form); this interaction allows clathrin-coated vesicle (CCV) formation at the plasma membrane. Post-translationally, the N-terminus is blocked. In terms of processing, phosphorylation at Ser-567 modulates its ability to bind CLTC and therefore the synaptic vesicle endocytosis (SVE). In terms of tissue distribution, brain.

It is found in the cytoplasmic vesicle. It localises to the clathrin-coated vesicle. May act as a protein phosphatase and/or a lipid phosphatase. Co-chaperone that recruits HSPA8/HSC70 to clathrin-coated vesicles (CCVs) and promotes the ATP-dependent dissociation of clathrin from CCVs and participates in clathrin-mediated endocytosis of synaptic vesicles and their recycling and also in intracellular trafficking. Firstly, binds tightly to the clathrin cages, at a ratio of one DNAJC6 per clathrin triskelion. The HSPA8:ATP complex then binds to the clathrin-auxilin cage, initially at a ratio of one HSPA8 per triskelion leading to ATP hydrolysis stimulation and causing a conformational change in the HSPA8. This cycle is repeated three times to drive to a complex containing the clathrin-auxilin cage associated to three HSPA8:ADP complex. The ATP hydrolysis of the third HSPA8:ATP complex leads to a concerted dismantling of the cage into component triskelia. Then, dissociates from the released triskelia and be recycled to initiate another cycle of HSPA8's recruitment. Also acts during the early steps of clathrin-coated vesicle (CCV) formation through its interaction with the GTP bound form of DNM1. This Bos taurus (Bovine) protein is Auxilin.